The following is a 3412-amino-acid chain: Genome polyprotein (3412 aa).

The disordered stretch occupies residues 1-30 (MAGKAILKGKGGGPPRRVSKETAKKTRQSR). The Cytoplasmic segment spans residues 1 to 98 (MAGKAILKGK…LQRRGKRRSA (98 aa)). A propeptide spans 97-117 (SAVDWTGWLLVVVLLGVTLAA) (ER anchor for the capsid protein C, removed in mature form by serine protease NS3). The chain crosses the membrane as a helical span at residues 99 to 119 (VDWTGWLLVVVLLGVTLAATV). The Extracellular portion of the chain corresponds to 120 to 242 (RKERDGTTVI…HLTRVEGWVW (123 aa)). N-linked (GlcNAc...) asparagine; by host glycosylation occurs at N144. The helical transmembrane segment at 243-260 (KNKVLTLAVIAVVWLTVE) threads the bilayer. S261 is a topological domain (cytoplasmic). A helical membrane pass occupies residues 262 to 280 (VVTRVAVVVVLLCLAPVYA). The Extracellular portion of the chain corresponds to 281 to 727 (SRCTHLENRD…HTVLGGAFNS (447 aa)). Cystine bridges form between C283-C310, C340-C396, C340-C401, C354-C385, C372-C396, and C372-C401. The tract at residues 378–391 (DRGWGNHCGLFGKG) is fusion peptide. The N-linked (GlcNAc...) asparagine; by host glycan is linked to N434. Disulfide bonds link C466–C570 and C587–C618. A helical transmembrane segment spans residues 728 to 748 (LFGGVGFLPKILVGVVLAWLG). The Cytoplasmic portion of the chain corresponds to 749–755 (LNMRNPT). Residues 756–776 (MSMSFLLAGGLVLAMTLGVGA) traverse the membrane as a helical segment. The Extracellular segment spans residues 777-1187 (DVGCAVDTER…LVKIESLVRY (411 aa)). 6 disulfide bridges follow: C780/C791, C831/C920, C955/C1000, C1057/C1106, C1068/C1090, and C1089/C1093. N-linked (GlcNAc...) asparagine; by host glycosylation is found at N861, N983, and N999. Residues 1188 to 1208 (VVAVGITFHLELGPEIVALTL) traverse the membrane as a helical segment. Residues 1209–1236 (LQAVFELRVGLLSAFALRSNLTVREMVT) lie on the Cytoplasmic side of the membrane. A helical membrane pass occupies residues 1237 to 1257 (IYFLLLVLELGLPSEGLGALW). The Lumenal segment spans residues 1258 to 1293 (KWGDALAMGALIFRACTAEEKTGVGLLLMALMTQQD). A helical transmembrane segment spans residues 1294–1314 (LATVHYGLMLFLGVASCCSIW). Residues 1315–1327 (KLIRGHREQKGLT) are Cytoplasmic-facing. The chain crosses the membrane as a helical span at residues 1328-1348 (WIVPLAGLLGGEGSGVRLVAF). The Cytoplasmic portion of the chain corresponds to 1349 to 1359 (WELTVHGRRRS). The helical transmembrane segment at 1360-1378 (FSEPLTVVGVMLTLASGMI) threads the bilayer. At 1379 to 1382 (RHTS) the chain is on the lumenal side. Residues 1383–1403 (QEALCALAVASFLLLMLVLGT) traverse the membrane as a helical segment. Topologically, residues 1404 to 1454 (RKMQLVAEWSGCVEWHPELMNEGGEVSLRVRQDSMGNFHLTELEKEERVMA) are cytoplasmic. The interacts with and activates NS3 protease stretch occupies residues 1410–1449 (AEWSGCVEWHPELMNEGGEVSLRVRQDSMGNFHLTELEKE). An intramembrane region (helical) is located at residues 1455-1475 (FWLLAGLAASAFHWSGILGVM). The Cytoplasmic portion of the chain corresponds to 1476-2160 (GLWTLSEMLR…KMAERDAPEA (685 aa)). The 180-residue stretch at 1490 to 1669 (SGLVFSGQGG…EAEKSRPNLP (180 aa)) folds into the Peptidase S7 domain. Catalysis depends on charge relay system; for serine protease NS3 activity residues H1543, D1567, and S1627. Residues 1675–1831 (TGWTAKGQIT…ESNGAISSEE (157 aa)) form the Helicase ATP-binding domain. Position 1688 to 1695 (1688 to 1695 (MHPGSGKT)) interacts with ATP. Residues 1779–1782 (DEAH) carry the DEAH box motif. One can recognise a Helicase C-terminal domain in the interval 1841–2000 (DGFDWITEYE…TLRGPVATFY (160 aa)). K1883 bears the N6-acetyllysine; by host mark. The helical transmembrane segment at 2161-2181 (FLTVVEMMVLGLATLGVVWCF) threads the bilayer. Over 2182-2189 (VVRTSISR) the chain is Lumenal. The segment at residues 2190-2210 (MMLGTLVLLASLALLWAGGVS) is an intramembrane region (helical). Residue Y2211 is a topological domain, lumenal. The chain crosses the membrane as a helical span at residues 2212 to 2232 (GNMAGVALIFYTLLTVLQPEA). The Cytoplasmic segment spans residues 2233–2244 (GKQRSSDDNKLA). The chain crosses the membrane as a helical span at residues 2245-2265 (YFLLTLCSLAGLVAANEMGFL). Residues 2266–2299 (EKTKADLSTVLWSEHEELRSWEEWTNIDIQPARS) lie on the Lumenal side of the membrane. Residues 2300–2320 (WGTYVLVVSLFTPYIIHQLQT) constitute an intramembrane region (helical). Residues 2321–2343 (KIQQLVNSAVATGAQAMRDLGGG) lie on the Lumenal side of the membrane. Positions 2344–2364 (APFFGVAGHVMALGVVSLVGA) form an intramembrane region, helical. Residues 2365-2368 (TPTS) are Lumenal-facing. A helical transmembrane segment spans residues 2369-2389 (LVVGVGLAAFHLAIVVSGLEA). Residues 2390 to 2430 (ELTQRAHKVFFSAMVRNPMVDGDVINPFGEGEAKPALYERK) lie on the Cytoplasmic side of the membrane. The chain crosses the membrane as a helical span at residues 2431-2451 (MSLVLAIVLCLMSVVMNRTVP). Residues 2452–2476 (STPRLLLWDWRQRDNCSNQRRTPFG) are Lumenal-facing. A helical membrane pass occupies residues 2477–2497 (RCQACGLSGVVRGSLWGFCPL). Residues 2498 to 3412 (GHRLWLRASG…WESKLESSII (915 aa)) are Cytoplasmic-facing. The 265-residue stretch at 2511–2775 (GGSEGDTLGD…ELDLGVGTRC (265 aa)) folds into the mRNA cap 0-1 NS5-type MT domain. S2566 contributes to the S-adenosyl-L-methionine binding site. Residue S2566 is modified to Phosphoserine. K2571 serves as the catalytic For 2'-O-MTase activity. S-adenosyl-L-methionine contacts are provided by G2596, W2597, I2615, D2641, and V2642. Catalysis depends on D2656, which acts as the For 2'-O-MTase activity. Position 2657 (I2657) interacts with S-adenosyl-L-methionine. Active-site for 2'-O-MTase activity residues include K2693 and E2729. Residues 2729 to 2733 (EMYYS) are interaction with host SCRIB. S-adenosyl-L-methionine is bound at residue Y2731. 4 residues coordinate Zn(2+): E2948, H2952, C2957, and C2960. Positions 3038-3187 (GLFYADDTAG…RPVDDRFSGA (150 aa)) constitute a RdRp catalytic domain. Positions 3222, 3238, and 3357 each coordinate Zn(2+).

This sequence in the N-terminal section; belongs to the class I-like SAM-binding methyltransferase superfamily. mRNA cap 0-1 NS5-type methyltransferase family. In terms of assembly, homodimer. Interacts (via N-terminus) with host EXOC1 (via C-terminus); this interaction results in EXOC1 degradation through the proteasome degradation pathway. Forms heterodimers with envelope protein E in the endoplasmic reticulum and Golgi. As to quaternary structure, homodimer; in the endoplasmic reticulum and Golgi. Interacts with protein prM. Interacts with non-structural protein 1. In terms of assembly, homodimer; Homohexamer when secreted. Interacts with envelope protein E. Interacts (via N-terminus) with serine protease NS3. As to quaternary structure, forms a heterodimer with serine protease NS3. May form homooligomers. In terms of assembly, forms a heterodimer with NS2B. Interacts with non-structural protein 2A (via N-terminus). Interacts with NS4B. Interacts with unphosphorylated RNA-directed RNA polymerase NS5; this interaction stimulates RNA-directed RNA polymerase NS5 guanylyltransferase activity. Interacts with serine protease NS3. Interacts with NS1. As to quaternary structure, homodimer. Interacts with host STAT2; this interaction inhibits the phosphorylation of the latter, and, when all viral proteins are present (polyprotein), targets STAT2 for degradation. Interacts with serine protease NS3. Interacts with host SCRIB; this interaction targets NS5 to the cell membrane periphery and nucleus, thereby allowing efficient host nuclear STAT1 inhibition. In terms of processing, specific enzymatic cleavages in vivo yield mature proteins. Cleavages in the lumen of endoplasmic reticulum are performed by host signal peptidase, whereas cleavages in the cytoplasmic side are performed by serine protease NS3. Signal cleavage at the 2K-4B site requires a prior NS3 protease-mediated cleavage at the 4A-2K site. Post-translationally, cleaved in post-Golgi vesicles by a host furin, releasing the mature small envelope protein M, and peptide pr. This cleavage is incomplete as up to 30% of viral particles still carry uncleaved prM. N-glycosylated. In terms of processing, N-glycosylated. The excreted form is glycosylated and this is required for efficient secretion of the protein from infected cells. Post-translationally, acetylated by host KAT5. Acetylation modulates NS3 RNA-binding and unwinding activities and plays an important positive role for viral replication. Phosphorylated on serines residues. This phosphorylation may trigger NS5 nuclear localization.

It localises to the virion. The protein resides in the host nucleus. Its subcellular location is the host cytoplasm. The protein localises to the host perinuclear region. It is found in the secreted. It localises to the virion membrane. The protein resides in the host endoplasmic reticulum membrane. The catalysed reaction is Selective hydrolysis of -Xaa-Xaa-|-Yaa- bonds in which each of the Xaa can be either Arg or Lys and Yaa can be either Ser or Ala.. It carries out the reaction RNA(n) + a ribonucleoside 5'-triphosphate = RNA(n+1) + diphosphate. The enzyme catalyses a ribonucleoside 5'-triphosphate + H2O = a ribonucleoside 5'-diphosphate + phosphate + H(+). It catalyses the reaction ATP + H2O = ADP + phosphate + H(+). The catalysed reaction is a 5'-end (5'-triphosphoguanosine)-ribonucleoside in mRNA + S-adenosyl-L-methionine = a 5'-end (N(7)-methyl 5'-triphosphoguanosine)-ribonucleoside in mRNA + S-adenosyl-L-homocysteine. It carries out the reaction a 5'-end (N(7)-methyl 5'-triphosphoguanosine)-ribonucleoside in mRNA + S-adenosyl-L-methionine = a 5'-end (N(7)-methyl 5'-triphosphoguanosine)-(2'-O-methyl-ribonucleoside) in mRNA + S-adenosyl-L-homocysteine + H(+). Functionally, plays a role in virus budding by binding to the cell membrane and gathering the viral RNA into a nucleocapsid that forms the core of a mature virus particle. During virus entry, may induce genome penetration into the host cytoplasm after hemifusion induced by the surface proteins. Can migrate to the cell nucleus where it modulates host functions. Inhibits RNA silencing by interfering with host Dicer. Its function is as follows. Prevents premature fusion activity of envelope proteins in trans-Golgi by binding to envelope protein E at pH6.0. After virion release in extracellular space, gets dissociated from E dimers. In terms of biological role, acts as a chaperone for envelope protein E during intracellular virion assembly by masking and inactivating envelope protein E fusion peptide. prM is the only viral peptide matured by host furin in the trans-Golgi network probably to avoid catastrophic activation of the viral fusion activity in acidic Golgi compartment prior to virion release. prM-E cleavage is inefficient, and many virions are only partially matured. These uncleaved prM would play a role in immune evasion. Functionally, may play a role in virus budding. Exerts cytotoxic effects by activating a mitochondrial apoptotic pathway through M ectodomain. May display a viroporin activity. Binds to host cell surface receptor and mediates fusion between viral and cellular membranes. Envelope protein is synthesized in the endoplasmic reticulum in the form of heterodimer with protein prM. They play a role in virion budding in the ER, and the newly formed immature particle is covered with 60 spikes composed of heterodimer between precursor prM and envelope protein E. The virion is transported to the Golgi apparatus where the low pH causes dissociation of PrM-E heterodimers and formation of E homodimers. prM-E cleavage is inefficient, and many virions are only partially matured. These uncleaved prM would play a role in immune evasion. Its function is as follows. Involved in immune evasion, pathogenesis and viral replication. Once cleaved off the polyprotein, is targeted to three destinations: the viral replication cycle, the plasma membrane and the extracellular compartment. Essential for viral replication. Required for formation of the replication complex and recruitment of other non-structural proteins to the ER-derived membrane structures. Excreted as a hexameric lipoparticle that plays a role against host immune response. Antagonizing the complement function. Binds to the host macrophages and dendritic cells. Inhibits signal transduction originating from Toll-like receptor 3 (TLR3). In terms of biological role, component of the viral RNA replication complex that functions in virion assembly and antagonizes the host immune response. Functionally, required cofactor for the serine protease function of NS3. May have membrane-destabilizing activity and form viroporins. Displays three enzymatic activities: serine protease, NTPase and RNA helicase. NS3 serine protease, in association with NS2B, performs its autocleavage and cleaves the polyprotein at dibasic sites in the cytoplasm: C-prM, NS2A-NS2B, NS2B-NS3, NS3-NS4A, NS4A-2K and NS4B-NS5. NS3 RNA helicase binds RNA and unwinds dsRNA in the 3' to 5' direction. Its function is as follows. Regulates the ATPase activity of the NS3 helicase activity. NS4A allows NS3 helicase to conserve energy during unwinding. In terms of biological role, functions as a signal peptide for NS4B and is required for the interferon antagonism activity of the latter. Functionally, induces the formation of ER-derived membrane vesicles where the viral replication takes place. Inhibits interferon (IFN)-induced host STAT1 phosphorylation and nuclear translocation, thereby preventing the establishment of cellular antiviral state by blocking the IFN-alpha/beta pathway. Inhibits STAT2 translocation in the nucleus after IFN-alpha treatment. Replicates the viral (+) and (-) genome, and performs the capping of genomes in the cytoplasm. NS5 methylates viral RNA cap at guanine N-7 and ribose 2'-O positions. Besides its role in RNA genome replication, also prevents the establishment of cellular antiviral state by blocking the interferon-alpha/beta (IFN-alpha/beta) signaling pathway. Inhibits host TYK2 and STAT2 phosphorylation, thereby preventing activation of JAK-STAT signaling pathway. The chain is Genome polyprotein from Homo sapiens (Human).